Here is a 199-residue protein sequence, read N- to C-terminus: ATP-dependent Clp protease proteolytic subunit (199 aa).

S102 functions as the Nucleophile in the catalytic mechanism. H127 is an active-site residue.

Belongs to the peptidase S14 family. In terms of assembly, fourteen ClpP subunits assemble into 2 heptameric rings which stack back to back to give a disk-like structure with a central cavity, resembling the structure of eukaryotic proteasomes.

Its subcellular location is the cytoplasm. It catalyses the reaction Hydrolysis of proteins to small peptides in the presence of ATP and magnesium. alpha-casein is the usual test substrate. In the absence of ATP, only oligopeptides shorter than five residues are hydrolyzed (such as succinyl-Leu-Tyr-|-NHMec, and Leu-Tyr-Leu-|-Tyr-Trp, in which cleavage of the -Tyr-|-Leu- and -Tyr-|-Trp bonds also occurs).. In terms of biological role, cleaves peptides in various proteins in a process that requires ATP hydrolysis. Has a chymotrypsin-like activity. Plays a major role in the degradation of misfolded proteins. This is ATP-dependent Clp protease proteolytic subunit from Pseudothermotoga lettingae (strain ATCC BAA-301 / DSM 14385 / NBRC 107922 / TMO) (Thermotoga lettingae).